The sequence spans 383 residues: 8-amino-7-oxononanoate synthase (383 aa).

Arg-22 serves as a coordination point for substrate. Residue 109-110 (GF) coordinates pyridoxal 5'-phosphate. Substrate is bound at residue His-134. The pyridoxal 5'-phosphate site is built by Ser-178, His-206, and Thr-232. An N6-(pyridoxal phosphate)lysine modification is found at Lys-235. A substrate-binding site is contributed by Thr-348.

It belongs to the class-II pyridoxal-phosphate-dependent aminotransferase family. BioF subfamily. Homodimer. The cofactor is pyridoxal 5'-phosphate.

It catalyses the reaction 6-carboxyhexanoyl-[ACP] + L-alanine + H(+) = (8S)-8-amino-7-oxononanoate + holo-[ACP] + CO2. It functions in the pathway cofactor biosynthesis; biotin biosynthesis. Functionally, catalyzes the decarboxylative condensation of pimeloyl-[acyl-carrier protein] and L-alanine to produce 8-amino-7-oxononanoate (AON), [acyl-carrier protein], and carbon dioxide. This Vibrio parahaemolyticus serotype O3:K6 (strain RIMD 2210633) protein is 8-amino-7-oxononanoate synthase.